The sequence spans 156 residues: Ecotin (156 aa).

The signal sequence occupies residues 1–19; that stretch reads MKALLIAAGVAALSSTAMA. An intrachain disulfide couples cysteine 65 to cysteine 102.

Belongs to the protease inhibitor I11 (ecotin) family. In terms of assembly, homodimer.

It is found in the periplasm. Its function is as follows. General inhibitor of family S1 serine proteases. This chain is Ecotin, found in Pseudomonas aeruginosa (strain UCBPP-PA14).